Reading from the N-terminus, the 305-residue chain is Aurora/IPL1-related protein kinase 2 (305 aa).

One can recognise a Protein kinase domain in the interval 30 to 280; that stretch reads FEIGRPLGKG…LEQVKEHYWI (251 aa). ATP is bound by residues 36–44 and Lys59; that span reads LGKGKFGSV. Catalysis depends on Asp153, which acts as the Proton acceptor.

It belongs to the protein kinase superfamily. Ser/Thr protein kinase family. Aurora subfamily. As to quaternary structure, component of the CPC complex which consists of icp-1; csc-1; bir-1 and air-2. Within the complex, interacts with icp-1; csc-1 and bir-1. Interacts with zen-4. Interacts with tlk-1 and bmk-1. In terms of processing, phosphorylated. Increased phosphorylation upon chromatin obstructions at anaphase.

The protein resides in the cytoplasm. The protein localises to the cytoskeleton. Its subcellular location is the chromosome. It is found in the midbody. It localises to the spindle. It catalyses the reaction L-seryl-[protein] + ATP = O-phospho-L-seryl-[protein] + ADP + H(+). It carries out the reaction L-threonyl-[protein] + ATP = O-phospho-L-threonyl-[protein] + ADP + H(+). In terms of biological role, serine/threonine-protein kinase component of the chromosomal passenger complex (CPC), a complex that acts as a key regulator of chromosome segregation and cytokinesis. The CPC complex has essential functions at the centromere in ensuring correct chromosome alignment and segregation. Required for histone H3 phosphorylation during segregation of homologous chromosomes in meiosis and mitosis. Required for histone H3 'Ser-10' phosphorylation. Phosphorylates tlk-1 at 'Ser-634', which enhances its activity. Phosphorylates zen-4 at 'Ser-680'. Required for the recruitment of bub-1 to the ring-shaped domain between chromosomes during meiotic anaphase I. Also required for the localization of the condensin I complex subunit smc-4 to mitotic chromosomes. Acts at the spindle midzone and the midbody to prevent cleavage furrow regression upon chromatin obstructions during cytokinesis. The protein is Aurora/IPL1-related protein kinase 2 of Caenorhabditis elegans.